The primary structure comprises 297 residues: Glucose-6-phosphate 1-epimerase (297 aa).

Positions 57, 81, and 86 each coordinate substrate. Phosphoserine is present on S88. The active site involves H159. D203 lines the substrate pocket. E264 is an active-site residue.

The protein belongs to the glucose-6-phosphate 1-epimerase family.

The catalysed reaction is alpha-D-glucose 6-phosphate = beta-D-glucose 6-phosphate. Catalyzes the interconversion between the alpha and beta anomers from at least three hexose 6-phosphate sugars (Glc6P, Gal6P, and Man6P). This chain is Glucose-6-phosphate 1-epimerase, found in Saccharomyces cerevisiae (strain ATCC 204508 / S288c) (Baker's yeast).